We begin with the raw amino-acid sequence, 170 residues long: Flavin reductase (170 aa).

NAD(+)-binding positions include Ser-51, His-138, and 159-162 (FYRG).

It belongs to the non-flavoprotein flavin reductase family. As to quaternary structure, homodimer. Likely forms a loose transient complex with monooxygenases for which it provides FMNH(2).

The catalysed reaction is FMNH2 + NAD(+) = FMN + NADH + 2 H(+). It carries out the reaction FADH2 + NAD(+) = FAD + NADH + 2 H(+). Catalyzes the reduction of FMN, and to a lesser extent, FAD, using NADH as an electron donor. Is able to provide the FMNH(2) required for the Baeyer-Villiger oxidations catalyzed by 2,5-diketocamphane monooxygenases and 3,6-diketocamphane monooxygenase. NADPH acts as a very poor cosubstrate. The polypeptide is Flavin reductase (Pseudomonas putida (Arthrobacter siderocapsulatus)).